The chain runs to 424 residues: Serine--tRNA ligase (424 aa).

229–231 lines the L-serine pocket; that stretch reads TAE. ATP is bound by residues 260 to 262 and V276; that span reads RTE. An L-serine-binding site is contributed by E283. ATP is bound at residue 347-350; it reads EVTS. Residue T382 participates in L-serine binding.

Belongs to the class-II aminoacyl-tRNA synthetase family. Type-1 seryl-tRNA synthetase subfamily. Homodimer. The tRNA molecule binds across the dimer.

It is found in the cytoplasm. The catalysed reaction is tRNA(Ser) + L-serine + ATP = L-seryl-tRNA(Ser) + AMP + diphosphate + H(+). It catalyses the reaction tRNA(Sec) + L-serine + ATP = L-seryl-tRNA(Sec) + AMP + diphosphate + H(+). It functions in the pathway aminoacyl-tRNA biosynthesis; selenocysteinyl-tRNA(Sec) biosynthesis; L-seryl-tRNA(Sec) from L-serine and tRNA(Sec): step 1/1. Its function is as follows. Catalyzes the attachment of serine to tRNA(Ser). Is also able to aminoacylate tRNA(Sec) with serine, to form the misacylated tRNA L-seryl-tRNA(Sec), which will be further converted into selenocysteinyl-tRNA(Sec). The sequence is that of Serine--tRNA ligase from Rubrobacter xylanophilus (strain DSM 9941 / JCM 11954 / NBRC 16129 / PRD-1).